The sequence spans 430 residues: Histidinol dehydrogenase (430 aa).

NAD(+)-binding residues include Y130, Q191, and N214. Substrate is bound by residues S237, Q259, and H262. Residues Q259 and H262 each coordinate Zn(2+). Active-site proton acceptor residues include E327 and H328. Residues H328, D361, E415, and H420 each contribute to the substrate site. Residue D361 coordinates Zn(2+). Position 420 (H420) interacts with Zn(2+).

This sequence belongs to the histidinol dehydrogenase family. Requires Zn(2+) as cofactor.

It catalyses the reaction L-histidinol + 2 NAD(+) + H2O = L-histidine + 2 NADH + 3 H(+). It participates in amino-acid biosynthesis; L-histidine biosynthesis; L-histidine from 5-phospho-alpha-D-ribose 1-diphosphate: step 9/9. Functionally, catalyzes the sequential NAD-dependent oxidations of L-histidinol to L-histidinaldehyde and then to L-histidine. This is Histidinol dehydrogenase from Brucella melitensis biotype 1 (strain ATCC 23456 / CCUG 17765 / NCTC 10094 / 16M).